Here is a 70-residue protein sequence, read N- to C-terminus: DNA gyrase inhibitor YacG (70 aa).

The Zn(2+) site is built by Cys-7, Cys-10, Cys-26, and Cys-30.

The protein belongs to the DNA gyrase inhibitor YacG family. Interacts with GyrB. Zn(2+) serves as cofactor.

Inhibits all the catalytic activities of DNA gyrase by preventing its interaction with DNA. Acts by binding directly to the C-terminal domain of GyrB, which probably disrupts DNA binding by the gyrase. The protein is DNA gyrase inhibitor YacG of Shewanella sediminis (strain HAW-EB3).